Reading from the N-terminus, the 666-residue chain is Transmembrane protein 201 (666 aa).

M1 is modified (N-acetylmethionine). Topologically, residues 1–213 (MEGVSALLAR…FSSAVKSPVQ (213 aa)) are nuclear. The helical transmembrane segment at 214–234 (VILLRALAFLACAFLLTTALY) threads the bilayer. At 235 to 297 (GASGHFAPGT…EAWAFGQSHQ (63 aa)) the chain is on the perinuclear space side. Residues 298-318 (TGVVALGLLTCLLAMLLAGRI) form a helical membrane-spanning segment. At 319–322 (RLRR) the chain is on the nuclear side. Residues 323–343 (IDAFCTCLWALLLGLHLAEQH) form a helical membrane-spanning segment. At 344 to 356 (LQAASPSWLDTLK) the chain is on the perinuclear space side. A helical transmembrane segment spans residues 357–374 (FSTTSLCCLVGFTAAVAT). Topologically, residues 375–644 (RKATGPRRFR…GRFGPSLVRG (270 aa)) are nuclear. S441, S444, S450, S454, S466, S477, and S480 each carry phosphoserine. Residues 502-581 (PLPSPAPSVA…PPHVPRKPPL (80 aa)) form a disordered region. Low complexity predominate over residues 508–520 (PSVAGSVASSSGS). Phosphoserine is present on S529. Residues 645–665 (LLAVSLAANALFTSVFLYQSL) traverse the membrane as a helical segment. R666 is a topological domain (perinuclear space).

The protein belongs to the TMEM201 family. In terms of assembly, interacts with SUN2 and LMNA. May bind to Ran GTPase; has a greater affinity for Ran-GTP over Ran-GDP. Interacts with EMD.

The protein localises to the nucleus inner membrane. Its subcellular location is the cytoplasm. It localises to the cytoskeleton. It is found in the spindle pole. Critical regulator of angiogenesis and endothelial cell (EC) migration. Promotes the migration of endothelial cells, which is essential for angiogenesis. Interacts with the linker of nucleoskeleton and cytoskeleton (LINC) complex, which plays a vital role in connecting the cell's cytoskeleton to the nuclear envelope. This interaction is essential for maintaining cellular structure and facilitating the movement of endothelial cells, which is critical for proper vascular development. Involved in nuclear movement during fibroblast polarization and migration. Overexpression can recruit Ran GTPase to the nuclear periphery. Its function is as follows. May define a distinct membrane domain in the vicinity of the mitotic spindle. Involved in the organization of the nuclear envelope implicating EMD, SUN1 and A-type lamina. This chain is Transmembrane protein 201 (TMEM201), found in Homo sapiens (Human).